The chain runs to 127 residues: Glycine cleavage system H protein (127 aa).

The 82-residue stretch at 24 to 105 folds into the Lipoyl-binding domain; that stretch reads TALVGITDFA…YGSGWMVKMK (82 aa). Lys-65 is subject to N6-lipoyllysine.

This sequence belongs to the GcvH family. The glycine cleavage system is composed of four proteins: P, T, L and H. The cofactor is (R)-lipoate.

The glycine cleavage system catalyzes the degradation of glycine. The H protein shuttles the methylamine group of glycine from the P protein to the T protein. In Chlorobium luteolum (strain DSM 273 / BCRC 81028 / 2530) (Pelodictyon luteolum), this protein is Glycine cleavage system H protein.